The chain runs to 698 residues: Protein CRAC (698 aa).

Residues 22 to 122 form the PH domain; sequence DVSYSSIMKK…FLTLLIARIR (101 aa). The interval 594–630 is disordered; it reads TGGGSVPSSQSTNNLQSSTSSMSSLSSSSTSTTKRSH. Residues 601 to 626 show a composition bias toward low complexity; the sequence is SSQSTNNLQSSTSSMSSLSSSSTSTT.

The protein localises to the cytoplasm. In terms of biological role, couples activated G protein to adenylyl cyclase signal transduction from surface cAMP receptor. Pianissimo a cytosolic regulator and CRAC, are both essential for activation of the enzyme adenylyl cyclase. Pianissimo and CRAC do not function redundantly. Both proteins are integral components of the adenylyl cyclase activation pathway. The polypeptide is Protein CRAC (dagA) (Dictyostelium discoideum (Social amoeba)).